The primary structure comprises 180 residues: Flavin prenyltransferase UbiX (180 aa).

Residues 9–11, Ser33, 84–87, and Arg119 contribute to the FMN site; these read GAS and SITT. Residues Tyr149 and Arg165 each coordinate dimethylallyl phosphate.

Belongs to the UbiX/PAD1 family.

The enzyme catalyses dimethylallyl phosphate + FMNH2 = prenylated FMNH2 + phosphate. Functionally, flavin prenyltransferase that catalyzes the synthesis of the prenylated FMN cofactor (prenyl-FMN) for 4-hydroxy-3-polyprenylbenzoic acid decarboxylase UbiD. The prenyltransferase is metal-independent and links a dimethylallyl moiety from dimethylallyl monophosphate (DMAP) to the flavin N5 and C6 atoms of FMN. This is Flavin prenyltransferase UbiX from Thermoplasma acidophilum (strain ATCC 25905 / DSM 1728 / JCM 9062 / NBRC 15155 / AMRC-C165).